The chain runs to 400 residues: MSKEKIAIAYSGGLDTSIMIKWLKDKYDAEIVAVTGNLGQQKEIENLESKAIATGASKFQFLDLRKEFVEEYIWRALKAGALYEDVYPLATALGRPLLAKAIVDTALAEGCTMLAHGCTGKGNDQVRFEVTFASLAPHLKVLAPLREWEFTSRESEIAYALEHNIQVSATKKNPYSIDENIWGISIECGVLEDPMVAPPEDAYQITTSPENAPNTPAVVEIEFEKGIPVSLDGKKMSGLDLIIRLNEIGAANGVGRLDMIENRVVGIKSREIYEAPAATILHFAHRELERLTLEKSVFQYKKNISQDYANIIYNGLWFSPMRKALDAFVDETQNPVTGLVRLKLYKGGVSLLGRNSPYSLYNEELATYTESDTFNHKAAAGFIHLYGLGLKTYSEVHTAK.

Residue 9-17 coordinates ATP; the sequence is AYSGGLDTS. Tyrosine 87 serves as a coordination point for L-citrulline. An ATP-binding site is contributed by glycine 117. Residues threonine 119, asparagine 123, and aspartate 124 each contribute to the L-aspartate site. Residue asparagine 123 participates in L-citrulline binding. L-citrulline-binding residues include arginine 127, serine 176, serine 185, glutamate 261, and tyrosine 273.

This sequence belongs to the argininosuccinate synthase family. Type 1 subfamily. Homotetramer.

It localises to the cytoplasm. The catalysed reaction is L-citrulline + L-aspartate + ATP = 2-(N(omega)-L-arginino)succinate + AMP + diphosphate + H(+). It functions in the pathway amino-acid biosynthesis; L-arginine biosynthesis; L-arginine from L-ornithine and carbamoyl phosphate: step 2/3. The sequence is that of Argininosuccinate synthase from Pelodictyon phaeoclathratiforme (strain DSM 5477 / BU-1).